Here is a 129-residue protein sequence, read N- to C-terminus: Small ribosomal subunit protein uS11 (129 aa).

Belongs to the universal ribosomal protein uS11 family. In terms of assembly, part of the 30S ribosomal subunit. Interacts with proteins S7 and S18. Binds to IF-3.

In terms of biological role, located on the platform of the 30S subunit, it bridges several disparate RNA helices of the 16S rRNA. Forms part of the Shine-Dalgarno cleft in the 70S ribosome. The sequence is that of Small ribosomal subunit protein uS11 from Parvibaculum lavamentivorans (strain DS-1 / DSM 13023 / NCIMB 13966).